A 388-amino-acid polypeptide reads, in one-letter code: MNLHEYQAKQLFAEFGLPVPEGYACDTPQEAFEAAGRISTAKKVVKCQVHAGGRGKAGGVELHDTKEGVKEFAQKWLGKNLVTYQTDANGQPVTKILVEEASNIANELYLGAVVDRATRKVVFMASTEGGVEIEKVAEETPELIHKAAIDPLVGPQAYQGRELAFKLGLQGDQIKQFVKIFMGLGEMFTQYDLALLEINPLVITGEGNLLCLDGKINIDSNALYRQPKLREMHDPSQEDKREAHAAQWELNYVALDGNVGCMVNGAGLAMGTMDIVNLHGGKPANFLDVGGGATKERVAEAFKIILSDDNVKAVLVNIFGGIVRCDMIAEGIIGAVKEVGVSVPVVVRLEGTNADLGRKVLAESGLDIIAAESLTDAAQKVVAAAEGK.

The 236-residue stretch at 9 to 244 folds into the ATP-grasp domain; sequence KQLFAEFGLP…PSQEDKREAH (236 aa). Residues Lys46, 53–55, Glu99, Ser102, and Glu107 contribute to the ATP site; that span reads GRG. Residues Asn199 and Asp213 each contribute to the Mg(2+) site. Substrate is bound by residues Asn264 and 321–323; that span reads GIV.

Belongs to the succinate/malate CoA ligase beta subunit family. As to quaternary structure, heterotetramer of two alpha and two beta subunits. Mg(2+) is required as a cofactor.

The catalysed reaction is succinate + ATP + CoA = succinyl-CoA + ADP + phosphate. The enzyme catalyses GTP + succinate + CoA = succinyl-CoA + GDP + phosphate. Its pathway is carbohydrate metabolism; tricarboxylic acid cycle; succinate from succinyl-CoA (ligase route): step 1/1. Its function is as follows. Succinyl-CoA synthetase functions in the citric acid cycle (TCA), coupling the hydrolysis of succinyl-CoA to the synthesis of either ATP or GTP and thus represents the only step of substrate-level phosphorylation in the TCA. The beta subunit provides nucleotide specificity of the enzyme and binds the substrate succinate, while the binding sites for coenzyme A and phosphate are found in the alpha subunit. The polypeptide is Succinate--CoA ligase [ADP-forming] subunit beta (Vibrio vulnificus (strain CMCP6)).